The following is a 65-amino-acid chain: Beta-defensin 106A (65 aa).

Positions 1–20 (MRTFLFLFAVLFFLTPAKNE) are cleaved as a signal peptide. 3 disulfide bridges follow: cysteine 26-cysteine 53, cysteine 33-cysteine 47, and cysteine 37-cysteine 54.

Belongs to the beta-defensin family. In terms of assembly, monomer. Interacts with CCR2 (via extracellular N-terminal region); this interaction may preferentially require specific tyrosine sulfation on CCR2.

Its subcellular location is the secreted. The protein resides in the membrane. Functionally, has antibacterial activity. Acts as a ligand for C-C chemokine receptor CCR2. The polypeptide is Beta-defensin 106A (DEFB106A) (Pongo pygmaeus (Bornean orangutan)).